A 490-amino-acid polypeptide reads, in one-letter code: Argininosuccinate lyase (490 aa).

The protein belongs to the lyase 1 family. Argininosuccinate lyase subfamily.

It localises to the cytoplasm. The catalysed reaction is 2-(N(omega)-L-arginino)succinate = fumarate + L-arginine. It participates in amino-acid biosynthesis; L-arginine biosynthesis; L-arginine from L-ornithine and carbamoyl phosphate: step 3/3. This Bifidobacterium longum subsp. infantis (strain ATCC 15697 / DSM 20088 / JCM 1222 / NCTC 11817 / S12) protein is Argininosuccinate lyase.